A 320-amino-acid chain; its full sequence is o-succinylbenzoate synthase (320 aa).

The active-site Proton donor is Lys133. The Mg(2+) site is built by Asp161, Glu190, and Asp213. Lys235 acts as the Proton acceptor in catalysis.

This sequence belongs to the mandelate racemase/muconate lactonizing enzyme family. MenC type 1 subfamily. A divalent metal cation is required as a cofactor.

It carries out the reaction (1R,6R)-6-hydroxy-2-succinyl-cyclohexa-2,4-diene-1-carboxylate = 2-succinylbenzoate + H2O. The protein operates within quinol/quinone metabolism; 1,4-dihydroxy-2-naphthoate biosynthesis; 1,4-dihydroxy-2-naphthoate from chorismate: step 4/7. Its pathway is quinol/quinone metabolism; menaquinone biosynthesis. Its function is as follows. Converts 2-succinyl-6-hydroxy-2,4-cyclohexadiene-1-carboxylate (SHCHC) to 2-succinylbenzoate (OSB). The sequence is that of o-succinylbenzoate synthase from Escherichia coli O127:H6 (strain E2348/69 / EPEC).